The following is a 408-amino-acid chain: Dual-specificity RNA methyltransferase RlmN (408 aa).

Glutamate 120 serves as the catalytic Proton acceptor. Residues 126–375 (EEGRGTLCIS…IRTPRGRDIL (250 aa)) form the Radical SAM core domain. A disulfide bridge connects residues cysteine 133 and cysteine 378. Positions 140, 144, and 147 each coordinate [4Fe-4S] cluster. S-adenosyl-L-methionine is bound by residues 204-205 (GE), serine 236, 258-260 (SLH), and asparagine 335. The active-site S-methylcysteine intermediate is the cysteine 378.

Belongs to the radical SAM superfamily. RlmN family. It depends on [4Fe-4S] cluster as a cofactor.

The protein localises to the cytoplasm. The enzyme catalyses adenosine(2503) in 23S rRNA + 2 reduced [2Fe-2S]-[ferredoxin] + 2 S-adenosyl-L-methionine = 2-methyladenosine(2503) in 23S rRNA + 5'-deoxyadenosine + L-methionine + 2 oxidized [2Fe-2S]-[ferredoxin] + S-adenosyl-L-homocysteine. It carries out the reaction adenosine(37) in tRNA + 2 reduced [2Fe-2S]-[ferredoxin] + 2 S-adenosyl-L-methionine = 2-methyladenosine(37) in tRNA + 5'-deoxyadenosine + L-methionine + 2 oxidized [2Fe-2S]-[ferredoxin] + S-adenosyl-L-homocysteine. In terms of biological role, specifically methylates position 2 of adenine 2503 in 23S rRNA and position 2 of adenine 37 in tRNAs. m2A2503 modification seems to play a crucial role in the proofreading step occurring at the peptidyl transferase center and thus would serve to optimize ribosomal fidelity. This chain is Dual-specificity RNA methyltransferase RlmN, found in Rhizobium leguminosarum bv. trifolii (strain WSM2304).